The following is a 230-amino-acid chain: MAKEQPNDLTEQLTDTPKTAVEQAETMQSVPQTIVKKTGTALSLLAILVALGIGGAGYYFGQQQMAKIQQKLTALENQTGANLSSNNTNNNKRLTQLEQSLKTAQENIAQLEQLIVSKTGEITSLQTQMKQVSQLAIAQQPSDWLFSEADFLLNNALRKLVLDNDVDTAVSLLKLADETLVKVNNSQANEIRSAINQDLKQLLSLSSVDQNAIMQKLSQLANTVDELQRL.

The protein to E.coli HemX N-terminal region.

This is an uncharacterized protein from Haemophilus influenzae (strain ATCC 51907 / DSM 11121 / KW20 / Rd).